Reading from the N-terminus, the 273-residue chain is Torsin-1A (273 aa).

An interaction with SNAPIN region spans residues 45 to 205; the sequence is KPKKPLTLSL…VSVFNNKNSG (161 aa). 56 to 63 is an ATP binding site; that stretch reads GWTGTGKN. Residues asparagine 97 and asparagine 112 are each glycosylated (N-linked (GlcNAc...) asparagine).

This sequence belongs to the ClpA/ClpB family. Torsin subfamily. As to quaternary structure, homohexamer. Interacts with TOR1B; the interaction may be specific of neural tissues. Interacts (ATP-bound) with TOR1AIP1 and TOR1AIP2; the interactions induce ATPase activity. Interacts with KLHL14; preferentially when ATP-free. Interacts with KLC1 (via TPR repeats); the interaction associates TOR1A with the kinesin oligomeric complex. Interacts with COPS4; the interaction associates TOR1A with the CSN complex. Interacts with SNAPIN; the interaction is direct and associates SNAPIN with the CSN complex. Interacts with STON2. Interacts (ATP-bound) with SYNE3 (via KASH domain); the interaction is required for SYNE3 nuclear envelope localization. Interacts with VIM; the interaction associates TOR1A with the cytoskeleton. Interacts with PLEC. Interacts (ATP-bound) with SLC6A3; regulates SLC6A3 transport to the plasma membrane. In terms of processing, N-glycosylated.

The protein resides in the endoplasmic reticulum lumen. It is found in the nucleus membrane. It localises to the cell projection. Its subcellular location is the growth cone. The protein localises to the cytoplasmic vesicle membrane. The protein resides in the synapse. It is found in the synaptosome. It localises to the cytoplasm. Its subcellular location is the cytoskeleton. It carries out the reaction ATP + H2O = ADP + phosphate + H(+). Functionally, protein with chaperone functions important for the control of protein folding, processing, stability and localization as well as for the reduction of misfolded protein aggregates. Involved in the regulation of synaptic vesicle recycling, controls STON2 protein stability in collaboration with the COP9 signalosome complex (CSN). In the nucleus, may link the cytoskeleton with the nuclear envelope, this mechanism seems to be crucial for the control of nuclear polarity, cell movement and, specifically in neurons, nuclear envelope integrity. Participates in the cellular trafficking and may regulate the subcellular location of multipass membrane proteins such as the dopamine transporter SLC6A3, leading to the modulation of dopamine neurotransmission. In the endoplasmic reticulum, plays a role in the quality control of protein folding by increasing clearance of misfolded proteins such as SGCE variants or holding them in an intermediate state for proper refolding. May have a redundant function with TOR1B in non-neural tissues. In Cricetus cricetus (Black-bellied hamster), this protein is Torsin-1A (TOR1A).